A 317-amino-acid chain; its full sequence is Dehydrogenase/reductase SDR family member 12 (317 aa).

NAD(+) contacts are provided by S50 and I52. A substrate-binding site is contributed by S175. Positions 201, 205, and 234 each coordinate NAD(+). The Proton acceptor role is filled by Y201.

Belongs to the short-chain dehydrogenases/reductases (SDR) family.

Putative oxidoreductase. This Homo sapiens (Human) protein is Dehydrogenase/reductase SDR family member 12.